The primary structure comprises 149 residues: UPF0178 protein VFMJ11_0615 (149 aa).

The protein belongs to the UPF0178 family.

This is UPF0178 protein VFMJ11_0615 from Aliivibrio fischeri (strain MJ11) (Vibrio fischeri).